Here is a 485-residue protein sequence, read N- to C-terminus: Glutamyl-tRNA(Gln) amidotransferase subunit A (485 aa).

Active-site charge relay system residues include lysine 79 and serine 154. Serine 178 (acyl-ester intermediate) is an active-site residue.

Belongs to the amidase family. GatA subfamily. Heterotrimer of A, B and C subunits.

It carries out the reaction L-glutamyl-tRNA(Gln) + L-glutamine + ATP + H2O = L-glutaminyl-tRNA(Gln) + L-glutamate + ADP + phosphate + H(+). Its function is as follows. Allows the formation of correctly charged Gln-tRNA(Gln) through the transamidation of misacylated Glu-tRNA(Gln) in organisms which lack glutaminyl-tRNA synthetase. The reaction takes place in the presence of glutamine and ATP through an activated gamma-phospho-Glu-tRNA(Gln). The sequence is that of Glutamyl-tRNA(Gln) amidotransferase subunit A from Staphylococcus aureus.